Here is a 60-residue protein sequence, read N- to C-terminus: Small ribosomal subunit protein bS21 (60 aa).

Residues 41-60 (PEEKRKRKAIARRRQRSRRR) form a disordered region. Basic residues predominate over residues 45-60 (RKRKAIARRRQRSRRR).

The protein belongs to the bacterial ribosomal protein bS21 family.

The protein is Small ribosomal subunit protein bS21 of Gloeothece citriformis (strain PCC 7424) (Cyanothece sp. (strain PCC 7424)).